The following is a 298-amino-acid chain: MNIRIGTRGSILAIAQTLEIKNLLNRYFPEISVQIVKIKTSGDINNQVPLSAIGGKSLFIKEIEEALLMGKVDLAVHSVKDIPAFYCEGLIIPCVLKRNSPYDVFISSKHKDIKSLPLNATIGTSSVRRKVQLNYLRPDLQVVPVRGNIDTRILKANVGEFDGIVLAEAGLIRINRCDVIKEILSPKIMLSAVGQGAIGIQCRVDDHSIINKIKVLNCHQSYVCVMAERSFLKTINGSCDTPLAALAQYVNNDTIHMSCMLANEKNMVFASCCFNECDAEKSGINMGKKLMDELSQYY.

Cysteine 239 is subject to S-(dipyrrolylmethanemethyl)cysteine.

Belongs to the HMBS family. Monomer. It depends on dipyrromethane as a cofactor.

The catalysed reaction is 4 porphobilinogen + H2O = hydroxymethylbilane + 4 NH4(+). It participates in porphyrin-containing compound metabolism; protoporphyrin-IX biosynthesis; coproporphyrinogen-III from 5-aminolevulinate: step 2/4. In terms of biological role, tetrapolymerization of the monopyrrole PBG into the hydroxymethylbilane pre-uroporphyrinogen in several discrete steps. The sequence is that of Porphobilinogen deaminase from Ehrlichia chaffeensis (strain ATCC CRL-10679 / Arkansas).